We begin with the raw amino-acid sequence, 531 residues long: Poly(A)-specific ribonuclease PNLDC1 (531 aa).

Residues Asp-28, Glu-30, Asp-271, and Asp-365 each coordinate Mg(2+). The helical transmembrane segment at 506 to 526 threads the bilayer; that stretch reads ITCLLQVCSIVTTWAMIAFLL.

This sequence belongs to the CAF1 family. Requires Mg(2+) as cofactor. As to expression, specifically expressed in embryonic stem cells. Highly expressed in testis.

The protein resides in the endoplasmic reticulum membrane. It catalyses the reaction Exonucleolytic cleavage of poly(A) to 5'-AMP.. In terms of biological role, 3'-exoribonuclease that has a preference for poly(A) tails of mRNAs, thereby efficiently degrading poly(A) tails. Exonucleolytic degradation of the poly(A) tail is often the first step in the decay of eukaryotic mRNAs and is also used to silence certain maternal mRNAs translationally during oocyte maturation and early embryonic development. May act as a regulator of multipotency in embryonic stem cells. Is a critical factor for proper spermatogenesis, involved in pre-piRNAs processing to generate mature piRNAs. In Mus musculus (Mouse), this protein is Poly(A)-specific ribonuclease PNLDC1.